A 418-amino-acid polypeptide reads, in one-letter code: EPS I polysaccharide export inner membrane protein EpsF (418 aa).

10 helical membrane-spanning segments follow: residues 21–41 (VLVVIGMLLVVPMAFPLLPII), 45–65 (CAAIFVILLPLGRLQHVLATA), 142–162 (PLLVWAVLIFISLMLAWIAIY), 170–190 (YVVFVSYLSTITLYALQGSAI), 222–242 (AGTHSSAAVVLLACAVVVLFL), 262–282 (LIVLLALAAAGAVFGSAEFVM), 296–316 (SAWELQLAVEAVLACLFAWLL), 326–346 (MAFLLFVVVCFSTSLFAPAVG), 347–367 (ARLFRYTYCFYIVYLCAFFFA), and 377–397 (KTLASLLLLASFGWAIFIVSA).

It to S.marcescens SfuB.

The protein localises to the cell inner membrane. Functionally, probably involved in polymerization and/or export of exopolysaccharide EPS I which functions as a virulence factor. May play a role in export of EPS I or its intermediates across the membranes. The protein is EPS I polysaccharide export inner membrane protein EpsF (epsF) of Ralstonia nicotianae (strain ATCC BAA-1114 / GMI1000) (Ralstonia solanacearum).